Here is a 449-residue protein sequence, read N- to C-terminus: Exodeoxyribonuclease 7 large subunit (449 aa).

Belongs to the XseA family. As to quaternary structure, heterooligomer composed of large and small subunits.

The protein resides in the cytoplasm. It carries out the reaction Exonucleolytic cleavage in either 5'- to 3'- or 3'- to 5'-direction to yield nucleoside 5'-phosphates.. Bidirectionally degrades single-stranded DNA into large acid-insoluble oligonucleotides, which are then degraded further into small acid-soluble oligonucleotides. This chain is Exodeoxyribonuclease 7 large subunit, found in Salmonella heidelberg (strain SL476).